The sequence spans 83 residues: Small ribosomal subunit protein eS21 (83 aa).

The protein belongs to the eukaryotic ribosomal protein eS21 family. As to quaternary structure, component of the 40S small ribosomal subunit.

Its subcellular location is the cytoplasm. It localises to the cytosol. It is found in the rough endoplasmic reticulum. Functionally, component of the small ribosomal subunit. The ribosome is a large ribonucleoprotein complex responsible for the synthesis of proteins in the cell. This chain is Small ribosomal subunit protein eS21 (rps21), found in Ictalurus punctatus (Channel catfish).